The chain runs to 235 residues: Ubiquitin-like-conjugating enzyme ATG10 (235 aa).

The active-site Glycyl thioester intermediate is cysteine 196.

Belongs to the ATG10 family. In terms of assembly, forms homooligomers. Interacts with ATG7 and ATG12.

The protein localises to the preautophagosomal structure membrane. Functionally, E2-like enzyme required for the cytoplasm to vacuole transport (Cvt), autophagy and nucleophagy. Acts as an E2-like enzyme that catalyzes the conjugation of ATG12 to ATG5. ATG12 conjugation to ATG5 is required for proper localization of ATG8 to the preautophagosomal structure (PAS). Likely serves as an ATG5-recognition molecule. Autophagy is required for proper vegetative growth, asexual/sexual reproduction, and full virulence. Autophagy is particularly involved in the biosynthesis of deoxynivalenol (DON), an important virulence determinant. The protein is Ubiquitin-like-conjugating enzyme ATG10 of Gibberella zeae (strain ATCC MYA-4620 / CBS 123657 / FGSC 9075 / NRRL 31084 / PH-1) (Wheat head blight fungus).